The sequence spans 167 residues: UPF0262 protein Nwi_0248 (167 aa).

This sequence belongs to the UPF0262 family.

The chain is UPF0262 protein Nwi_0248 from Nitrobacter winogradskyi (strain ATCC 25391 / DSM 10237 / CIP 104748 / NCIMB 11846 / Nb-255).